Consider the following 459-residue polypeptide: Cysteine--tRNA ligase (459 aa).

Cys31 contacts Zn(2+). A 'HIGH' region motif is present at residues 33–43; it reads PTVYDNPHIGN. Zn(2+)-binding residues include Cys216, His241, and Glu245. The 'KMSKS' region motif lies at 274–278; sequence KMSKS. Residue Lys277 coordinates ATP.

The protein belongs to the class-I aminoacyl-tRNA synthetase family. In terms of assembly, monomer. Requires Zn(2+) as cofactor.

It localises to the cytoplasm. It carries out the reaction tRNA(Cys) + L-cysteine + ATP = L-cysteinyl-tRNA(Cys) + AMP + diphosphate. This chain is Cysteine--tRNA ligase, found in Rickettsia massiliae (strain Mtu5).